A 497-amino-acid chain; its full sequence is Replication factor C large subunit (497 aa).

50-57 (GPAGVGKT) contacts ATP. Basic and acidic residues predominate over residues 428 to 455 (KRRSLGRDEGKAFFEKKPKKQTPDKKQM). Residues 428–497 (KRRSLGRDEG…AKPQKTLFDF (70 aa)) form a disordered region. Over residues 456 to 465 (DLTQIINSTP) the composition is skewed to polar residues. Basic and acidic residues predominate over residues 466–476 (QEDKVEKKETE).

The protein belongs to the activator 1 small subunits family. RfcL subfamily. In terms of assembly, heteromultimer composed of small subunits (RfcS) and large subunits (RfcL).

Its function is as follows. Part of the RFC clamp loader complex which loads the PCNA sliding clamp onto DNA. The chain is Replication factor C large subunit from Methanococcoides burtonii (strain DSM 6242 / NBRC 107633 / OCM 468 / ACE-M).